The sequence spans 332 residues: MKVAVLGAGAWGTALAGHLAARHDTLLWARDAALIAGLQARHENSRYLEGIALPDALRYDADLDAALAHGAADDALCVIGAPVAGLRTLLRAMRDARCVPAHVVWVCKGFEADTHLLPHQVIAAELPEQRSNGVLSGPSFAREVGLGLPVALTVASASAACRERTLAAFHHGAMRIYTGDDVVGVEVGGAVKNVLAIATGIADGLGLGLNARAALITRGLAEMSRLGVALGGRAETFTGLTGLGDLILTATGDLSRNRTVGLQLASGRSLADILGALGHVAEGVRCAQAVLALAHAHAIEMPITEAVCGVLFDGVAPRDAVSGLLRRDARAE.

NADPH contacts are provided by W11, R30, and K108. Residues K108, G137, and S139 each coordinate sn-glycerol 3-phosphate. A141 contacts NADPH. Positions 192, 245, 255, 256, and 257 each coordinate sn-glycerol 3-phosphate. K192 serves as the catalytic Proton acceptor. R256 provides a ligand contact to NADPH. NADPH is bound by residues V280 and E282.

It belongs to the NAD-dependent glycerol-3-phosphate dehydrogenase family.

The protein localises to the cytoplasm. It catalyses the reaction sn-glycerol 3-phosphate + NAD(+) = dihydroxyacetone phosphate + NADH + H(+). The catalysed reaction is sn-glycerol 3-phosphate + NADP(+) = dihydroxyacetone phosphate + NADPH + H(+). Its pathway is membrane lipid metabolism; glycerophospholipid metabolism. Functionally, catalyzes the reduction of the glycolytic intermediate dihydroxyacetone phosphate (DHAP) to sn-glycerol 3-phosphate (G3P), the key precursor for phospholipid synthesis. The protein is Glycerol-3-phosphate dehydrogenase [NAD(P)+] of Burkholderia vietnamiensis (strain G4 / LMG 22486) (Burkholderia cepacia (strain R1808)).